The primary structure comprises 129 residues: Fluoride-specific ion channel FluC (129 aa).

4 consecutive transmembrane segments (helical) span residues Met-1–Ala-21, Gly-35–Ile-55, Leu-71–Asn-91, and Ala-105–Ala-125. Na(+) is bound by residues Gly-79 and Thr-82.

The protein belongs to the fluoride channel Fluc/FEX (TC 1.A.43) family.

The protein localises to the cell inner membrane. The enzyme catalyses fluoride(in) = fluoride(out). With respect to regulation, na(+) is not transported, but it plays an essential structural role and its presence is essential for fluoride channel function. Fluoride-specific ion channel. Important for reducing fluoride concentration in the cell, thus reducing its toxicity. In Chlorobium phaeobacteroides (strain DSM 266 / SMG 266 / 2430), this protein is Fluoride-specific ion channel FluC.